The sequence spans 308 residues: Aspartate carbamoyltransferase catalytic subunit (308 aa).

Arginine 59 and threonine 60 together coordinate carbamoyl phosphate. Lysine 87 serves as a coordination point for L-aspartate. Residues arginine 109, histidine 137, and glutamine 140 each coordinate carbamoyl phosphate. Arginine 170 and arginine 224 together coordinate L-aspartate. 2 residues coordinate carbamoyl phosphate: glycine 265 and proline 266.

It belongs to the aspartate/ornithine carbamoyltransferase superfamily. ATCase family. Heterododecamer (2C3:3R2) of six catalytic PyrB chains organized as two trimers (C3), and six regulatory PyrI chains organized as three dimers (R2).

The enzyme catalyses carbamoyl phosphate + L-aspartate = N-carbamoyl-L-aspartate + phosphate + H(+). Its pathway is pyrimidine metabolism; UMP biosynthesis via de novo pathway; (S)-dihydroorotate from bicarbonate: step 2/3. Its function is as follows. Catalyzes the condensation of carbamoyl phosphate and aspartate to form carbamoyl aspartate and inorganic phosphate, the committed step in the de novo pyrimidine nucleotide biosynthesis pathway. In Flavobacterium psychrophilum (strain ATCC 49511 / DSM 21280 / CIP 103535 / JIP02/86), this protein is Aspartate carbamoyltransferase catalytic subunit.